The primary structure comprises 297 residues: Light-independent protochlorophyllide reductase iron-sulfur ATP-binding protein (297 aa).

ATP contacts are provided by residues 41 to 46 (GIGKST) and lysine 70. Residue serine 45 coordinates Mg(2+). [4Fe-4S] cluster-binding residues include cysteine 126 and cysteine 160. Residues 211-212 (NR) and 235-237 (PDL) each bind ATP.

The protein belongs to the NifH/BchL/ChlL family. In terms of assembly, homodimer. Protochlorophyllide reductase is composed of three subunits; BchL, BchN and BchB. [4Fe-4S] cluster is required as a cofactor.

It carries out the reaction chlorophyllide a + oxidized 2[4Fe-4S]-[ferredoxin] + 2 ADP + 2 phosphate = protochlorophyllide a + reduced 2[4Fe-4S]-[ferredoxin] + 2 ATP + 2 H2O. It functions in the pathway porphyrin-containing compound metabolism; bacteriochlorophyll biosynthesis (light-independent). Functionally, component of the dark-operative protochlorophyllide reductase (DPOR) that uses Mg-ATP and reduced ferredoxin to reduce ring D of protochlorophyllide (Pchlide) to form chlorophyllide a (Chlide). This reaction is light-independent. The L component serves as a unique electron donor to the NB-component of the complex, and binds Mg-ATP. The sequence is that of Light-independent protochlorophyllide reductase iron-sulfur ATP-binding protein from Methylorubrum extorquens (strain CM4 / NCIMB 13688) (Methylobacterium extorquens).